The chain runs to 147 residues: 3-hydroxyacyl-[acyl-carrier-protein] dehydratase FabZ (147 aa).

The active site involves His50.

The protein belongs to the thioester dehydratase family. FabZ subfamily.

Its subcellular location is the cytoplasm. It carries out the reaction a (3R)-hydroxyacyl-[ACP] = a (2E)-enoyl-[ACP] + H2O. Functionally, involved in unsaturated fatty acids biosynthesis. Catalyzes the dehydration of short chain beta-hydroxyacyl-ACPs and long chain saturated and unsaturated beta-hydroxyacyl-ACPs. The sequence is that of 3-hydroxyacyl-[acyl-carrier-protein] dehydratase FabZ from Lactiplantibacillus plantarum (strain ATCC BAA-793 / NCIMB 8826 / WCFS1) (Lactobacillus plantarum).